A 195-amino-acid polypeptide reads, in one-letter code: UPF0157 protein BH1888 (195 aa).

Polar residues predominate over residues 1 to 12 (MPPMKDSSNSTP). Residues 1-21 (MPPMKDSSNSTPRTDEELQEV) are disordered.

The protein belongs to the UPF0157 (GrpB) family.

This is UPF0157 protein BH1888 from Halalkalibacterium halodurans (strain ATCC BAA-125 / DSM 18197 / FERM 7344 / JCM 9153 / C-125) (Bacillus halodurans).